The primary structure comprises 376 residues: uncharacterized protein (376 aa).

The protein belongs to the mimivirus R1 family.

This is an uncharacterized protein from Acanthamoeba polyphaga mimivirus (APMV).